Reading from the N-terminus, the 354-residue chain is MKSLLLLVLISFCWADHHSDNYTVDHDRVIHIQAENGPRLLVEAEQAKVFSRRGGNVTLPCKFYRDPTAFGSGTHKIRIKWTKLTSDYLKEVDVFVSMGYHKKTYGGYHGRVFLKGGSDNDASLVITDLTLEDYGRYKCEVIEGLEDDTAVVALDLQGVVFPYFPRLGRYNLNFHEAQQACLDQDAVIASFDQLYDAWRSGLDWCNAGWLSDGSVQYPITKPREPCGGQNTVPGVRNYGFWDKDKSRYDVFCFTSNFNGRFYYLIHPTKLTYDEAVQACLNDGAQIAKVGQIFAAWKLLGYDRCDAGWLADGSVRYPISRPRRRCSPSEAAVRFVGFPDKKHKLYGVYCFRAYN.

Positions 1 to 15 (MKSLLLLVLISFCWA) are excised as a propeptide. Residues Asn21 and Asn56 are each glycosylated (N-linked (GlcNAc...) asparagine). The Ig-like V-type domain maps to 38–152 (PRLLVEAEQA…EGLEDDTAVV (115 aa)). Disulfide bonds link Cys61-Cys139, Cys181-Cys252, Cys205-Cys226, Cys279-Cys349, and Cys304-Cys325. 2 Link domains span residues 159-254 (VVFP…FCFT) and 259-351 (GRFY…YCFR).

Belongs to the HAPLN family.

It is found in the secreted. The protein localises to the extracellular space. The protein resides in the extracellular matrix. Stabilizes the aggregates of proteoglycan monomers with hyaluronic acid in the extracellular cartilage matrix. In Bos taurus (Bovine), this protein is Hyaluronan and proteoglycan link protein 1 (HAPLN1).